The primary structure comprises 694 residues: Probable metal-nicotianamine transporter YSL8 (694 aa).

The next 14 helical transmembrane spans lie at 38 to 58 (ITVR…FIVM), 62 to 82 (LTSG…FFLM), 110 to 130 (CVIS…ILGM), 154 to 174 (LGRL…SIVP), 215 to 235 (ILFK…FYAA), 265 to 285 (VGVG…GSVV), 319 to 339 (VFIS…SIVL), 393 to 413 (IAAA…PHIF), 421 to 441 (VVWA…GTGL), 467 to 487 (GGVV…STAS), 506 to 526 (MFVS…MVFW), 567 to 587 (LRFC…KEVA), 608 to 628 (FFLG…LFLW), and 643 to 663 (VASG…ILSL).

This sequence belongs to the YSL (TC 2.A.67.2) family. As to expression, expressed in root epidermis and exoderm.

It is found in the membrane. May be involved in the transport of nicotianamine-chelated metals. In Oryza sativa subsp. japonica (Rice), this protein is Probable metal-nicotianamine transporter YSL8 (YSL8).